Consider the following 211-residue polypeptide: Adenylate kinase (211 aa).

10-15 (GSGKGT) is a binding site for ATP. Residues 30 to 59 (STGDLFRENILNSTALGQEIKKIVERGELV) are NMP. AMP contacts are provided by residues Thr31, Arg36, 57-59 (ELV), 85-88 (GFPR), and Gln92. Positions 121 to 158 (GRRICKSCNNIFNIYTLTTKKNGICDVCGGDLYQREDD) are LID. Arg122 contacts ATP. Zn(2+) is bound by residues Cys125 and Cys128. 131 to 132 (IF) provides a ligand contact to ATP. Zn(2+)-binding residues include Cys145 and Cys148. The AMP site is built by Arg155 and Arg166. An ATP-binding site is contributed by Val194.

The protein belongs to the adenylate kinase family. As to quaternary structure, monomer.

It localises to the cytoplasm. The catalysed reaction is AMP + ATP = 2 ADP. It participates in purine metabolism; AMP biosynthesis via salvage pathway; AMP from ADP: step 1/1. In terms of biological role, catalyzes the reversible transfer of the terminal phosphate group between ATP and AMP. Plays an important role in cellular energy homeostasis and in adenine nucleotide metabolism. In Borreliella burgdorferi (strain ATCC 35210 / DSM 4680 / CIP 102532 / B31) (Borrelia burgdorferi), this protein is Adenylate kinase.